A 533-amino-acid polypeptide reads, in one-letter code: Putative adhesin P1-like protein MPN_409 (533 aa).

Disordered regions lie at residues 15-45 and 92-166; these read KNHRGVDDITAPKTGAGSSSGTSTNTSGSRS and SGWR…SITP. Over residues 28-45 the composition is skewed to low complexity; that stretch reads TGAGSSSGTSTNTSGSRS. A compositionally biased stretch (basic and acidic residues) spans 95–107; the sequence is RNDKNGQSDENHT.

The protein belongs to the adhesin P1 family.

The sequence is that of Putative adhesin P1-like protein MPN_409 from Mycoplasma pneumoniae (strain ATCC 29342 / M129 / Subtype 1) (Mycoplasmoides pneumoniae).